A 251-amino-acid polypeptide reads, in one-letter code: Capsid protein (251 aa).

Residues 1 to 29 (MPKRDAPWRSMAGTSKVSRNANYSPRSGI) are disordered. The short motif at 3–20 (KRDAPWRSMAGTSKVSRN) is the Bipartite nuclear localization signal element. A compositionally biased stretch (polar residues) spans 12 to 25 (AGTSKVSRNANYSP). The short motif at 35 to 49 (KAAEWVNRPMYRKPR) is the Nuclear localization signal element. The segment at 63–80 (CEGPCKVQSFEQRHDILH) is a zinc-finger region. The short motif at 96 to 117 (ITHRVGKRFCVKSVYILGKIWM) is the Nuclear export signal element. Residues 195-242 (RRFWKVNNHVVYNHQEAGKYENHTENALLLYMACTHASNPVYATLKIR) carry the Bipartite nuclear localization signal motif.

The protein belongs to the geminiviridae capsid protein family. Homomultimer. Binds to single-stranded and double-stranded viral DNA. Interacts (via nuclear localization signals) with host importin alpha-1a.

It localises to the virion. Its subcellular location is the host nucleus. Its function is as follows. Encapsidates the viral DNA into characteristic twinned ('geminate') particles. Binds the genomic viral ssDNA and shuttles it into and out of the cell nucleus. The CP of bipartite geminiviruses is not required for cell-to-cell or systemic movement. The protein is Capsid protein of Solanum tuberosum (Potato).